A 421-amino-acid chain; its full sequence is Extracellular signal-regulated kinase 1 (421 aa).

Residues 70-375 (YQILEIVGEG…VEDALKHPYL (306 aa)) enclose the Protein kinase domain. ATP is bound by residues 76 to 84 (VGEGAYGIV) and K99. The Proton acceptor role is filled by D194. A Phosphothreonine modification is found at T230. The short motif at 230-232 (TEY) is the TXY element. A Phosphotyrosine modification is found at Y232.

It belongs to the protein kinase superfamily. CMGC Ser/Thr protein kinase family. MAP kinase subfamily. Requires Mg(2+) as cofactor. Dually phosphorylated on Thr-230 and Tyr-232, which activates the enzyme.

It carries out the reaction L-seryl-[protein] + ATP = O-phospho-L-seryl-[protein] + ADP + H(+). The catalysed reaction is L-threonyl-[protein] + ATP = O-phospho-L-threonyl-[protein] + ADP + H(+). Activated by tyrosine and threonine phosphorylation. This chain is Extracellular signal-regulated kinase 1 (CEK1), found in Candida albicans (strain SC5314 / ATCC MYA-2876) (Yeast).